A 672-amino-acid chain; its full sequence is Beta-galactosidase BgaB (672 aa).

A substrate-binding site is contributed by R109. A Zn(2+)-binding site is contributed by C113. N147 provides a ligand contact to substrate. E148 serves as the catalytic Proton donor. Zn(2+) contacts are provided by C156, C158, and C161. E303 functions as the Nucleophile in the catalytic mechanism. Substrate contacts are provided by residues W311 and 351-354; that span reads EKFH.

The protein belongs to the glycosyl hydrolase 42 family.

The enzyme catalyses Hydrolysis of terminal non-reducing beta-D-galactose residues in beta-D-galactosides.. The chain is Beta-galactosidase BgaB from Geobacillus sp. (strain Y412MC61).